Consider the following 552-residue polypeptide: uncharacterized protein (552 aa).

Glycine 29–serine 36 is an ATP binding site. The region spanning arginine 379–proline 469 is the Toprim domain.

This is an uncharacterized protein from Escherichia coli (strain K12).